The following is a 118-amino-acid chain: Large ribosomal subunit protein bL20 (118 aa).

This sequence belongs to the bacterial ribosomal protein bL20 family.

In terms of biological role, binds directly to 23S ribosomal RNA and is necessary for the in vitro assembly process of the 50S ribosomal subunit. It is not involved in the protein synthesizing functions of that subunit. This is Large ribosomal subunit protein bL20 from Salmonella arizonae (strain ATCC BAA-731 / CDC346-86 / RSK2980).